The following is a 336-amino-acid chain: Retinol dehydrogenase 14 (336 aa).

Phosphothreonine is present on Thr5. Residue 50 to 56 coordinates NADP(+); the sequence is GANSGLG. Ser192 contributes to the substrate binding site. Tyr217 functions as the Proton acceptor in the catalytic mechanism.

This sequence belongs to the short-chain dehydrogenases/reductases (SDR) family. Widely expressed.

It carries out the reaction all-trans-retinol + NADP(+) = all-trans-retinal + NADPH + H(+). The catalysed reaction is 9-cis-retinol + NADP(+) = 9-cis-retinal + NADPH + H(+). It catalyses the reaction 11-cis-retinol + NADP(+) = 11-cis-retinal + NADPH + H(+). It functions in the pathway cofactor metabolism; retinol metabolism. In terms of biological role, retinol dehydrogenase with a clear preference for NADP. Displays high activity towards 9-cis, 11-cis and all-trans-retinol. Shows a very weak activity towards 13-cis-retinol. Has no activity towards steroid. This Homo sapiens (Human) protein is Retinol dehydrogenase 14 (RDH14).